We begin with the raw amino-acid sequence, 747 residues long: Mediator of RNA polymerase II transcription subunit 25 (747 aa).

The tract at residues 1 to 226 (MVPGSEGPAR…PRHMVLVRGL (226 aa)) is interaction with the Mediator complex. Disordered regions lie at residues 233–274 (GSAP…QYQV) and 299–390 (LGPR…PALG). Composition is skewed to pro residues over residues 263–272 (QPLPPVPPQY) and 326–342 (PQLPPGPPGAPKPPPAS). The segment at 389–543 (LGGQQSVSNK…VNGIRQVITN (155 aa)) is interaction with VP16. Residues 395-545 (VSNKLLAWSG…GIRQVITNHK (151 aa)) form an interaction with CREBBP region. The disordered stretch occupies residues 548–747 (QQQKLEQQQR…MEDDILMDLI (200 aa)). Interaction with RARA regions lie at residues 564 to 653 (APPG…LLNP) and 640 to 707 (PGAN…WPAQ). The span at 598–611 (ASGATGQPQPQGTA) shows a compositional bias: low complexity. The span at 612–634 (QPPPGAPQGPPGAASGPPPPGPI) shows a compositional bias: pro residues. Residues 646–650 (LRSLL) carry the LXXLL motif motif. Pro residues-rich tracts occupy residues 652–664 (NPPPPQTGVPPPQ), 673–683 (PGAPALLPPPH), and 691–713 (LGPPLLHPPPAQSWPAQLPPRAP). The residue at position 725 (Arg725) is an Asymmetric dimethylarginine. The segment covering 738-747 (MEDDILMDLI) has biased composition (acidic residues).

The protein belongs to the Mediator complex subunit 25 family. As to quaternary structure, component of the Mediator complex, which is composed of MED1, MED4, MED6, MED7, MED8, MED9, MED10, MED11, MED12, MED13, MED13L, MED14, MED15, MED16, MED17, MED18, MED19, MED20, MED21, MED22, MED23, MED24, MED25, MED26, MED27, MED29, MED30, MED31, CCNC, CDK8 and CDC2L6/CDK11. The MED12, MED13, CCNC and CDK8 subunits form a distinct module termed the CDK8 module. Mediator containing the CDK8 module is less active than Mediator lacking this module in supporting transcriptional activation. Individual preparations of the Mediator complex lacking one or more distinct subunits have been variously termed ARC, CRSP, DRIP, PC2, SMCC and TRAP. Interacts with CREBBP. Interacts with ESR1, GR, RARA, RXRA and THRB in a ligand-dependent fashion. Binds the Herpes simplex virus activator VP16. As to expression, ubiquitously expressed. Highest levels in brain, heart, kidney, peripheral leukocytes, placenta, skeletal muscle and spleen.

It localises to the nucleus. Its function is as follows. Component of the Mediator complex, a coactivator involved in the regulated transcription of nearly all RNA polymerase II-dependent genes. Mediator functions as a bridge to convey information from gene-specific regulatory proteins to the basal RNA polymerase II transcription machinery. Mediator is recruited to promoters by direct interactions with regulatory proteins and serves as a scaffold for the assembly of a functional preinitiation complex with RNA polymerase II and the general transcription factors. Required for RARA/RXRA-mediated transcription. The polypeptide is Mediator of RNA polymerase II transcription subunit 25 (MED25) (Homo sapiens (Human)).